The following is a 315-amino-acid chain: Small ribosomal subunit protein uS3 (315 aa).

The region spanning 38–106 is the KH type-2 domain; that stretch reads IRKMMSRGME…QVQLNILEVK (69 aa). Positions 211-315 are disordered; it reads AEREAQEALQ…VANTPEKAEE (105 aa). The span at 222–232 shows a compositional bias: basic residues; it reads QTRRERPRRGP. The span at 265–315 shows a compositional bias: low complexity; that stretch reads APAETPAGEAAATEPTAPVAEPATAAASAPAEAASAPAEAAVANTPEKAEE.

Belongs to the universal ribosomal protein uS3 family. As to quaternary structure, part of the 30S ribosomal subunit. Forms a tight complex with proteins S10 and S14.

Its function is as follows. Binds the lower part of the 30S subunit head. Binds mRNA in the 70S ribosome, positioning it for translation. The chain is Small ribosomal subunit protein uS3 from Frankia casuarinae (strain DSM 45818 / CECT 9043 / HFP020203 / CcI3).